The primary structure comprises 207 residues: N-(5'-phosphoribosyl)anthranilate isomerase (207 aa).

Belongs to the TrpF family.

The enzyme catalyses N-(5-phospho-beta-D-ribosyl)anthranilate = 1-(2-carboxyphenylamino)-1-deoxy-D-ribulose 5-phosphate. Its pathway is amino-acid biosynthesis; L-tryptophan biosynthesis; L-tryptophan from chorismate: step 3/5. This Geotalea daltonii (strain DSM 22248 / JCM 15807 / FRC-32) (Geobacter daltonii) protein is N-(5'-phosphoribosyl)anthranilate isomerase.